Here is a 361-residue protein sequence, read N- to C-terminus: Queuine tRNA-ribosyltransferase (361 aa).

Residue Asp92 is the Proton acceptor of the active site. Residues 92-96, Asp146, Gln189, and Gly216 each bind substrate; that span reads DSGGF. An RNA binding region spans residues 247–253; that stretch reads GVGKPAD. Asp266 (nucleophile) is an active-site residue. The interval 271–275 is RNA binding; important for wobble base 34 recognition; the sequence is TRSGR. Residues Cys304, Cys306, Cys309, and His335 each contribute to the Zn(2+) site.

This sequence belongs to the queuine tRNA-ribosyltransferase family. As to quaternary structure, homodimer. Within each dimer, one monomer is responsible for RNA recognition and catalysis, while the other monomer binds to the replacement base PreQ1. The cofactor is Zn(2+).

The enzyme catalyses 7-aminomethyl-7-carbaguanine + guanosine(34) in tRNA = 7-aminomethyl-7-carbaguanosine(34) in tRNA + guanine. The protein operates within tRNA modification; tRNA-queuosine biosynthesis. Catalyzes the base-exchange of a guanine (G) residue with the queuine precursor 7-aminomethyl-7-deazaguanine (PreQ1) at position 34 (anticodon wobble position) in tRNAs with GU(N) anticodons (tRNA-Asp, -Asn, -His and -Tyr). Catalysis occurs through a double-displacement mechanism. The nucleophile active site attacks the C1' of nucleotide 34 to detach the guanine base from the RNA, forming a covalent enzyme-RNA intermediate. The proton acceptor active site deprotonates the incoming PreQ1, allowing a nucleophilic attack on the C1' of the ribose to form the product. After dissociation, two additional enzymatic reactions on the tRNA convert PreQ1 to queuine (Q), resulting in the hypermodified nucleoside queuosine (7-(((4,5-cis-dihydroxy-2-cyclopenten-1-yl)amino)methyl)-7-deazaguanosine). This Rickettsia bellii (strain OSU 85-389) protein is Queuine tRNA-ribosyltransferase.